The primary structure comprises 120 residues: Large ribosomal subunit protein bL20 (120 aa).

It belongs to the bacterial ribosomal protein bL20 family.

Its function is as follows. Binds directly to 23S ribosomal RNA and is necessary for the in vitro assembly process of the 50S ribosomal subunit. It is not involved in the protein synthesizing functions of that subunit. In Pseudoalteromonas translucida (strain TAC 125), this protein is Large ribosomal subunit protein bL20.